Consider the following 805-residue polypeptide: Polycystin-2-like protein 1 (805 aa).

The tract at residues 1-59 (MNAVGSPEGQELQKLGSGAWDNPAYSGPPSPHGTLRVCTISSTGPLQPQPKKPEDEPQE) is disordered. The Cytoplasmic portion of the chain corresponds to 1–103 (MNAVGSPEGQ…ELYIKTTLRE (103 aa)). C38 carries the S-palmitoyl cysteine lipid modification. Residues 104-124 (LLVYIVFLVDICLLTYGMTSS) form a helical membrane-spanning segment. The Extracellular portion of the chain corresponds to 125-356 (SAYYYTKVMS…NWDFFIVGCE (232 aa)). 2 N-linked (GlcNAc...) asparagine glycosylation sites follow: N177 and N207. Residues C210 and C223 are joined by a disulfide bond. N-linked (GlcNAc...) asparagine glycosylation is present at N241. The helical transmembrane segment at 357–376 (VIFCVFIFYYVVEEILELHI) threads the bilayer. The Ca(2+) site is built by E370 and E373. The Cytoplasmic portion of the chain corresponds to 377–384 (HRLRYLSS). Residues 385 to 405 (IWNILDLVVILLSIVAVGFHI) form a helical membrane-spanning segment. Ca(2+) contacts are provided by N387 and D390. Topologically, residues 406-433 (FRTLEVNRLMGKLLQQPNTYADFEFLAF) are extracellular. The helical transmembrane segment at 434 to 454 (WQTQYNNMNAVNLFFAWIKIF) threads the bilayer. The Cytoplasmic portion of the chain corresponds to 455 to 479 (KYISFNKTMTQLSSTLARCAKDILG). Residues 480-499 (FAVMFFIVFFAYAQLGYLLF) traverse the membrane as a helical segment. Residues 500-511 (GTQVENFSTFIK) lie on the Extracellular side of the membrane. N-linked (GlcNAc...) asparagine glycosylation is present at N505. An intramembrane region (pore-forming) is located at residues 512 to 526 (CIFTQFRIILGDFDY). Residues 527 to 536 (NAIDNANRIL) lie on the Extracellular side of the membrane. A helical transmembrane segment spans residues 537-557 (GPAYFVTYVFFVFFVLLNMFL). At 558 to 805 (AIINDTYSEV…RGEIPTLQRS (248 aa)) the chain is on the cytoplasmic side. Residues 633–668 (HEITELTATFTKFDRDGNRILDEKEQEKMRQDLEEE) enclose the EF-hand domain. Coiled coils occupy residues 650 to 686 (NRILDEKEQEKMRQDLEEERVALNTEIEKLGRSIVSS) and 700 to 740 (GWVS…MLER). Residues 704-763 (GEEFYMLTRRVLQLETVLEGVVSQIDAVGSKLKMLERKGWLAPSPGVKEQAIWKHPQPAP) form a required for homooligomerization region. The interval 759 to 805 (PQPAPAVTPDPWGVQGGQESEVPYKREEEALEERRLSRGEIPTLQRS) is disordered. Positions 780-796 (VPYKREEEALEERRLSR) are enriched in basic and acidic residues.

This sequence belongs to the polycystin family. In terms of assembly, oligomer. Functional PKD2L1 homotetramer can be formed either through C-terminal trimerization followed by N-terminal dimerization of a fourth subunit with a subunit in the trimer or through dimerization followed by trimerization. Heterotetramer with either PKD1L1, PKD1L3 or PKD1; the heterotetrameric complex contains three PKD1L2 chains plus one chain from another family member. Interacts with PKD1L1, forming a ciliary calcium channel. Interacts with PKD1L3, forming a cation channel that is activated by low extracellular pH. Interacts with PKD1; this heteromeric functional cation channels is opened by hypo-osmotic stimulation. Interacts with RACK1; inhibits the channel activity possibly by impairing localization to the cell membrane. In terms of processing, palmitoylation is important for expression at the cell membrane and for channel activity. In terms of tissue distribution, detected in taste bud cells in fungiform papillae (at protein level). Ubiquitous. Expressed in adult heart, skeletal muscle, brain, spleen, testis, retina and liver. Isoform 4 appears to be expressed only in transformed lymphoblasts.

Its subcellular location is the cell projection. It is found in the cilium membrane. The protein localises to the cell membrane. The protein resides in the cytoplasmic vesicle. It catalyses the reaction Ca(2+)(in) = Ca(2+)(out). The catalysed reaction is Na(+)(in) = Na(+)(out). The enzyme catalyses K(+)(in) = K(+)(out). It carries out the reaction Mg(2+)(in) = Mg(2+)(out). With respect to regulation, the non-selective cation channel is gated following an off-response property by acid: gated open after the removal of acid stimulus, but not during acid application. Channel activity is inhibited by phosphatidylinositol-4,5-bisphosphate (PIP2). Non-selective cation channel activity is substantially increased when either the extracellular or intracellular calcium-ion concentration is raised. Regulation of non-selective cation channel activity by external calcium is bimodal, first sensitizing and subsequently inactivating the current. Functionally, homotetrameric, non-selective cation channel that is permeable to sodium, potassium, magnesium and calcium. Also forms functionnal heteromeric channels with PKD1, PKD1L1 and PKD1L3. Pore-forming subunit of a heterotetrameric, non-selective cation channel, formed by PKD1L2 and PKD1L3, that is permeable to sodium, potassium, magnesium and calcium and which may act as a sour taste receptor in gustatory cells; however, its contribution to sour taste perception is unclear in vivo and may be indirect. The homomeric and heteromeric channels formed by PKD1L2 and PKD1L3 are activated by low pH and Ca(2+), but opens only when the extracellular pH rises again and after the removal of acid stimulus. Pore-forming subunit of a calcium-permeant ion channel formed by PKD1L2 and PKD1L1 in primary cilia, where it controls cilium calcium concentration, without affecting cytoplasmic calcium concentration, and regulates sonic hedgehog/SHH signaling and GLI2 transcription. The PKD1L1:PKD2L1 complex channel is mechanosensitive only at high pressures and is highly temperature sensitive. Pore-forming subunit of a calcium-permeant ion channel formed by PKD1L2 and PKD1 that produces a transient increase in intracellular calcium concentration upon hypo-osmotic stimulation (200 mOsm). May play a role in the perception of carbonation taste. May play a role in the sensory perception of water, via a mechanism that activates the channel in response to dilution of salivary bicarbonate and changes in salivary pH. The sequence is that of Polycystin-2-like protein 1 from Homo sapiens (Human).